The following is a 263-amino-acid chain: Neurovirulence factor ICP34.5 (263 aa).

Basic residues predominate over residues 1-14 (MARRRRHRGPRRPR). Residues 1–16 (MARRRRHRGPRRPRPP) are required for nucleolar localization. 2 disordered regions span residues 1–128 (MARR…PFRL) and 149–190 (RRAG…PATP). Residues 24 to 35 (TAQSQVTSTPNS) show a composition bias toward polar residues. The segment covering 45-58 (AAPPPPPASGPPPS) has biased composition (pro residues). Residues 73-83 (ASDDDDDDDWP) show a composition bias toward acidic residues. Pro residues-rich tracts occupy residues 84–93 (DSPPPEPAPE) and 119–128 (SHPPSRPFRL). The short motif at 128-137 (LPPRLALRLR) is the Nuclear export signal element. 10 consecutive repeat copies span residues 161–163 (ATP), 164–166 (ATP), 167–169 (ATP), 170–172 (ATP), 173–175 (ATP), 176–178 (ATP), 179–181 (ATP), 182–184 (ATP), 185–187 (ATP), and 188–190 (ATP). The 10 X 3 AA tandem repeats of A-T-P stretch occupies residues 161 to 190 (ATPATPATPATPATPATPATPATPATPATP). A compositionally biased stretch (low complexity) spans 164–190 (ATPATPATPATPATPATPATPATPATP). The segment at 190 to 203 (PARVRFSPHVRVRH) is interaction with host PPP1CA. Residues 205 to 263 (VVWASAARLARRGSWARERADRARFRRRVAEAEAVIGPCLGPEARARALARGAGPANSV) form an important for interferon resistance region. A Bipartite nuclear localization signal motif is present at residues 215 to 233 (RRGSWARERADRARFRRRV). The interaction with host EIF2S1/EIF-2ALPHA stretch occupies residues 233–248 (VAEAEAVIGPCLGPEA).

This sequence belongs to the PPP1R15 family. In terms of assembly, interacts with host PPP1CA; this interaction to forms a high-molecular-weight complex that dephosphorylates EIF2S1/eIF-2alpha. Interacts with host EIF2S1/eIF-2alpha; this interaction is crucial for the specific dephosphorylation of EIF2S1/eIF-2alpha by PPP1CA. Binds to proliferating cell nuclear antigen (PCNA), which may release host cells from growth arrest and facilitate viral replication. Interacts (via N-terminus) with host C1QBP; this interaction allows C1QBP to be recruited to the inner nuclear membrane by ICP34.5. Interacts with host PRKCA. Interacts with protein UL31. Interacts with host STING/TMEM173; this interaction inhibits the intracellular DNA sensing pathway. Interacts with host BECN1; this interaction modulates host autophagy.

It is found in the host cytoplasm. The protein localises to the host nucleus. It localises to the host nucleolus. The protein resides in the virion. In terms of biological role, inhibits the establishment of the immune response and of the integrated stress response (ISR) in the infected cell. Plays essential roles in viral nuclear egress to mediate capsid transit across the nuclear membrane. Facilitates nuclear egress cooperatively with host C1QBP and protein kinase C/PKC to induce lamin A/C phosphorylation and subsequent reorganization. In turn, lamina disassembles and nuclear egress occurs. Recruits the serine/threonine protein phosphatase PPP1CA/PP1-alpha to dephosphorylate the translation initiation factor EIF2S1/eIF-2alpha, thereby couteracting the host shutoff of protein synthesis involving double-stranded RNA-dependent protein kinase EIF2AK2/PKR. In turn, controls host IRF3 activation and subsequently inhibits host interferon response. Controls the DNA sensing pathway by interacting with and inhibiting host STING/TMEM173. Also down-modulates the host MHC class II proteins cell surface expression. Acts as a neurovirulence factor that has a profound effect on the growth of the virus in central nervous system tissue, by interacting with host BECN1 and thereby antagonizing the host autophagy response. The chain is Neurovirulence factor ICP34.5 (RL1) from Human herpesvirus 1 (strain F) (HHV-1).